Here is an 832-residue protein sequence, read N- to C-terminus: Disintegrin and metalloproteinase domain-containing protein 23 (832 aa).

Residues M1–Q10 are compositionally biased toward polar residues. The disordered stretch occupies residues M1–A37. The first 59 residues, M1–S59, serve as a signal peptide directing secretion. A compositionally biased stretch (low complexity) spans G28–A37. The propeptide occupies S60–R286. Residues N76, N96, N100, and N263 are each glycosylated (N-linked (GlcNAc...) asparagine). Over A287–N792 the chain is Extracellular. One can recognise a Peptidase M12B domain in the interval K299 to P496. Cystine bridges form between C408–C491, C450–C475, and C452–C459. The 87-residue stretch at P502–D588 folds into the Disintegrin domain. N547 and N548 each carry an N-linked (GlcNAc...) asparagine glycan. C560 and C580 are oxidised to a cystine. The interval A563–D568 is may bind the integrin receptor. N664 and N732 each carry an N-linked (GlcNAc...) asparagine glycan. Residues N732 to S769 enclose the EGF-like domain. 3 cysteine pairs are disulfide-bonded: C736–C751, C745–C757, and C759–C768. Residues L793–G813 traverse the membrane as a helical segment. Residues W814 to I832 are Cytoplasmic-facing.

Can bind to LGI1 and LGI4. Ligand for integrin alpha-V/beta-3. Highly expressed in the brain and weakly expressed in the heart. In the brain, expressed prominently in the amygdala, caudate nucleus, hypothalamus, thalamus, cerebral cortex and occipital pole.

The protein resides in the cell membrane. It localises to the secreted. In terms of biological role, may play a role in cell-cell and cell-matrix interactions. This is a non-catalytic metalloprotease-like protein. This is Disintegrin and metalloproteinase domain-containing protein 23 (ADAM23) from Homo sapiens (Human).